Reading from the N-terminus, the 470-residue chain is Light-independent protochlorophyllide reductase subunit N (470 aa).

Cys-24, Cys-49, and Cys-109 together coordinate [4Fe-4S] cluster.

It belongs to the BchN/ChlN family. In terms of assembly, protochlorophyllide reductase is composed of three subunits; ChlL, ChlN and ChlB. Forms a heterotetramer of two ChlB and two ChlN subunits. It depends on [4Fe-4S] cluster as a cofactor.

It catalyses the reaction chlorophyllide a + oxidized 2[4Fe-4S]-[ferredoxin] + 2 ADP + 2 phosphate = protochlorophyllide a + reduced 2[4Fe-4S]-[ferredoxin] + 2 ATP + 2 H2O. It functions in the pathway porphyrin-containing compound metabolism; chlorophyll biosynthesis (light-independent). Component of the dark-operative protochlorophyllide reductase (DPOR) that uses Mg-ATP and reduced ferredoxin to reduce ring D of protochlorophyllide (Pchlide) to form chlorophyllide a (Chlide). This reaction is light-independent. The NB-protein (ChlN-ChlB) is the catalytic component of the complex. This Acaryochloris marina (strain MBIC 11017) protein is Light-independent protochlorophyllide reductase subunit N.